A 419-amino-acid polypeptide reads, in one-letter code: 2-amino-3-ketobutyrate coenzyme A ligase, mitochondrial (419 aa).

The N-terminal 21 residues, 1 to 21 (MWAGRVLHAALSRAPRESRAQ), are a transit peptide targeting the mitochondrion. An N6-acetyllysine; alternate modification is found at K45. Position 45 is an N6-succinyllysine; alternate (K45). Residue 134 to 135 (CF) participates in pyridoxal 5'-phosphate binding. Position 159 (H159) interacts with substrate. K187 is modified (N6-acetyllysine; alternate). The residue at position 187 (K187) is an N6-succinyllysine; alternate. Residues S206, 231–234 (DESH), 262–265 (TLGK), and 295–296 (SN) contribute to the pyridoxal 5'-phosphate site. K265 carries the post-translational modification N6-(pyridoxal phosphate)lysine. N6-succinyllysine occurs at positions 326 and 368. An N6-acetyllysine; alternate modification is found at K383. K383 is modified (N6-succinyllysine; alternate). Residue R389 coordinates substrate.

This sequence belongs to the class-II pyridoxal-phosphate-dependent aminotransferase family. The cofactor is pyridoxal 5'-phosphate.

It localises to the mitochondrion. It is found in the nucleus. It carries out the reaction glycine + acetyl-CoA = (2S)-2-amino-3-oxobutanoate + CoA. It participates in amino-acid degradation; L-threonine degradation via oxydo-reductase pathway; glycine from L-threonine: step 2/2. Functionally, pyridoxal phosphate (PLP) dependent enzyme, which catalyzes the cleavage of 2-amino-3-oxobutanoate to glycine and acetyl-CoA. Catalyzes the second reaction step on the main metabolic degradation pathway for L-threonine. The chain is 2-amino-3-ketobutyrate coenzyme A ligase, mitochondrial (GCAT) from Bos taurus (Bovine).